We begin with the raw amino-acid sequence, 339 residues long: Lipoate-protein ligase A (339 aa).

The region spanning 29–216 is the BPL/LPL catalytic domain; that stretch reads DPSQQVLFLW…SFENFYAGKA (188 aa). ATP-binding positions include Arg-71, 76-79, and Lys-134; that span reads GAVF. Lys-134 lines the (R)-lipoate pocket.

The protein belongs to the LplA family. As to quaternary structure, monomer.

It localises to the cytoplasm. The enzyme catalyses L-lysyl-[lipoyl-carrier protein] + (R)-lipoate + ATP = N(6)-[(R)-lipoyl]-L-lysyl-[lipoyl-carrier protein] + AMP + diphosphate + H(+). Its pathway is protein modification; protein lipoylation via exogenous pathway; protein N(6)-(lipoyl)lysine from lipoate: step 1/2. The protein operates within protein modification; protein lipoylation via exogenous pathway; protein N(6)-(lipoyl)lysine from lipoate: step 2/2. Functionally, catalyzes both the ATP-dependent activation of exogenously supplied lipoate to lipoyl-AMP and the transfer of the activated lipoyl onto the lipoyl domains of lipoate-dependent enzymes. In Bdellovibrio bacteriovorus (strain ATCC 15356 / DSM 50701 / NCIMB 9529 / HD100), this protein is Lipoate-protein ligase A.